The chain runs to 1030 residues: MALSDIIQRRDWENPQSVNIHCLKAHSPLASYRDINHARDGIHAQRQSLNGQWKFKLFDAPEQVEGEFIDVQFNDSAWGDITVPSNWQLQGYDKPIYANVKYPFEVNPPYVPADNPTGCYRTRLTLTEADLESTQRIIFDGVNSAFHLWCNGDWVGYSQDSRLPAEFDLSQYLTAGENTLAVMVIRWSDGSYLEDQDMWWLSGIFRDVTLLSKPKQCIEDVFITPDLDACYRDGSLSIVTHISAPETSQVHVQLFDGSQAVTEPSIARPHNRRIDERGSYDDVVFQTLHVREPQQWTAETPNLYRVVVSLLDAEGNHLESEAYQVGFRKVEVKDGQLQLNGKPLLIRGVNRHEHHPELGHVMTEEDMVRDICLMKQYNFNAVRTAHYPNHPRWYELCDQYGLYVCDEANIETHGMIPMNRLSADPQWAHAYMSRYTQMVMRDKNHPSIIIWSLGNESGHGSSHNAMYAWSKQFDPSRPVQYEGGGANTTATDIICPMYARVNTTVEDEAVPKWPIKQWISLPNEQRPLILCEYAHAMGNSLGNFNEYWDAFREFPRLQGGFIWDWVDQGLSQWDNDGKHFWAYGGDFGDTINDRQFCINGLIFPDRTPHPTLEEVKFCQRMITVALTQQDKQQCHLTVTNEYVFRSTDNEQLHWSVLENGVEVQSGQCTLAIDAGSQQTVDIALDFQPKADAKYHLNTDICLISATPWAQAGHVSATEQFTLSNTSSLTLPKISILSAPQLSEQGRDILVSNLDKKHQWQWNVESGLLTSWMVDGQSQLLHAPEDNFFRAPLDNDIGVSEIDNIDPNAWVCRWDAAGIGRWERECVSCTSESLSQAVKVTSTFAYHHNGGVQAITVWTYTLDNQGEMHIDVDVTLADHLPPMPRIGLELALPLPSDNTTVTWQGLGPFENYPDRLAAARFGQHTQSLDAMHTPYIFPTDSGLRSGTQWLNVGNLECTGDFLFSVSRFSQQQLTEAKHTNELTLEDKIYLRIDHQHMGVGGDDSWSPSVHEEFQLTDNTYRFSIMLKPRHN.

Substrate is bound by residues Asn-99 and Asp-197. Residue Asp-197 coordinates Na(+). Glu-411, His-413, and Glu-456 together coordinate Mg(2+). Substrate contacts are provided by residues Glu-456 and 532–535 (EYAH). Catalysis depends on Glu-456, which acts as the Proton donor. The Nucleophile role is filled by Glu-532. Asn-592 lines the Mg(2+) pocket. Na(+) contacts are provided by Phe-596 and Asn-599. Positions 599 and 1004 each coordinate substrate.

Belongs to the glycosyl hydrolase 2 family. Homotetramer. Mg(2+) is required as a cofactor. Requires Na(+) as cofactor.

It catalyses the reaction Hydrolysis of terminal non-reducing beta-D-galactose residues in beta-D-galactosides.. In Photobacterium profundum (strain SS9), this protein is Beta-galactosidase.